Here is a 465-residue protein sequence, read N- to C-terminus: UDP-N-acetylmuramoylalanine--D-glutamate ligase (465 aa).

124–130 (GSDGKTT) contributes to the ATP binding site.

It belongs to the MurCDEF family.

It localises to the cytoplasm. The catalysed reaction is UDP-N-acetyl-alpha-D-muramoyl-L-alanine + D-glutamate + ATP = UDP-N-acetyl-alpha-D-muramoyl-L-alanyl-D-glutamate + ADP + phosphate + H(+). Its pathway is cell wall biogenesis; peptidoglycan biosynthesis. In terms of biological role, cell wall formation. Catalyzes the addition of glutamate to the nucleotide precursor UDP-N-acetylmuramoyl-L-alanine (UMA). The protein is UDP-N-acetylmuramoylalanine--D-glutamate ligase of Ruminiclostridium cellulolyticum (strain ATCC 35319 / DSM 5812 / JCM 6584 / H10) (Clostridium cellulolyticum).